The sequence spans 245 residues: Thioredoxin-like 1-2, chloroplastic (245 aa).

The N-terminal 92 residues, 1–92 (MDAISSLGTN…TNHNMLEIQS (92 aa)), are a transit peptide targeting the chloroplast. The Thioredoxin domain maps to 93 to 194 (ANHLVDSLLN…FKKALDKHGS (102 aa)). Residues Cys-117 and Cys-120 each act as nucleophile in the active site. A disulfide bridge connects residues Cys-117 and Cys-120.

This sequence belongs to the thioredoxin family.

Its subcellular location is the plastid. It localises to the chloroplast. Its function is as follows. Probable thiol-disulfide oxidoreductase that may participate in various redox reactions. This is Thioredoxin-like 1-2, chloroplastic from Arabidopsis thaliana (Mouse-ear cress).